The primary structure comprises 95 residues: MSVDQETVKRVSHLARIAIHDDEIEPMTKELNVILGFVEQLNEVDVNGIEPLTSVMPMALRMREDSVTDGDKVADIVANAPVTEENFFLVSKVVE.

It belongs to the GatC family. In terms of assembly, heterotrimer of A, B and C subunits.

The enzyme catalyses L-glutamyl-tRNA(Gln) + L-glutamine + ATP + H2O = L-glutaminyl-tRNA(Gln) + L-glutamate + ADP + phosphate + H(+). It carries out the reaction L-aspartyl-tRNA(Asn) + L-glutamine + ATP + H2O = L-asparaginyl-tRNA(Asn) + L-glutamate + ADP + phosphate + 2 H(+). Allows the formation of correctly charged Asn-tRNA(Asn) or Gln-tRNA(Gln) through the transamidation of misacylated Asp-tRNA(Asn) or Glu-tRNA(Gln) in organisms which lack either or both of asparaginyl-tRNA or glutaminyl-tRNA synthetases. The reaction takes place in the presence of glutamine and ATP through an activated phospho-Asp-tRNA(Asn) or phospho-Glu-tRNA(Gln). The protein is Aspartyl/glutamyl-tRNA(Asn/Gln) amidotransferase subunit C of Bartonella quintana (strain Toulouse) (Rochalimaea quintana).